Here is a 368-residue protein sequence, read N- to C-terminus: MTGAQRWVVKIGSALLTADGKGLDRNAMGVWVEQMAALHEAGVELVLVSSGAVAAGMSRLGWTARPSAMHELQAAAAIGQMGLVQAWESSFAEHGRHTAQILLTHDDLSDRKRYLNARSTLRTLVELGVVPVINENDTVVTDEIRFGDNDTLAALVANLVEADLLVILTDRDGMFDADPRNNPEAQLIYEARADDPALDAVAGGTGGALGRGGMQTKLRAARLAARSGAHTVIVGGRIERVLARLKGGERLGTLLSPERGMLAARKQWLAGHLQTRGTLVLDDGAVAALAKDQKSLLPVGVKLVQGSFRRGEMVVCVASDGREIARGLSNYSAIEAQKIIGHSSESIVRELGYMAEPELIHRDNLILV.

Lysine 10 is a binding site for ATP. Substrate contacts are provided by serine 50, aspartate 137, and asparagine 149. Position 169 to 170 (169 to 170) interacts with ATP; it reads TD. The region spanning 276-354 is the PUA domain; the sequence is RGTLVLDDGA…ESIVRELGYM (79 aa).

It belongs to the glutamate 5-kinase family.

It localises to the cytoplasm. It carries out the reaction L-glutamate + ATP = L-glutamyl 5-phosphate + ADP. Its pathway is amino-acid biosynthesis; L-proline biosynthesis; L-glutamate 5-semialdehyde from L-glutamate: step 1/2. In terms of biological role, catalyzes the transfer of a phosphate group to glutamate to form L-glutamate 5-phosphate. In Pseudomonas savastanoi pv. phaseolicola (strain 1448A / Race 6) (Pseudomonas syringae pv. phaseolicola (strain 1448A / Race 6)), this protein is Glutamate 5-kinase.